Here is a 70-residue protein sequence, read N- to C-terminus: Large ribosomal subunit protein bL28 (70 aa).

It belongs to the bacterial ribosomal protein bL28 family.

The polypeptide is Large ribosomal subunit protein bL28 (Maridesulfovibrio salexigens (strain ATCC 14822 / DSM 2638 / NCIMB 8403 / VKM B-1763) (Desulfovibrio salexigens)).